A 636-amino-acid polypeptide reads, in one-letter code: MKKLLENLSLWMGIIILVTLLFGQVALNFGFGIRNEKIQFSEFLDLVEKGEVQKIVIEGYDISGVLKSGTRFYTKATQYTELIPLLRKNNVDFQVASGDSFLGLLFNILISWFPMLLLIGVWIFFMKQMQAGGNKTMTFGKSKARLLSDRSNKVTFHDVAGIDEAKEELAEIVEFLREPKKFQKLGGKIPKGCLLIGPPGTGKTLLAKAIAGEAKVPFFSISGSDFVEMFVGVGASRVRDMFEQGKKNAPCLIFIDEIDAVGRHRGVGFGGGNDEREQTLNQLLVEMDGFEANEGVIIIAATNRPDVLDPALLRPGRFDRQITISIPDIAGRQKILEVHLKKIPTAPNVEVSIIARGTPGFSGADLANLVNESALIAARRNKKVVTNEDFEYARDKILMGMERKSLVMREEEKLLTAYHEAGHAVTSLKLEASDPIHKATIIPRGRALGLVMRLPEHDRVSFTRAKMHADLIVAMGGRAAEQVIFGDDKTTSGAASDIKQATHLARSMVTKWGMSEKVGPLLYGEQNDPNNHILSIEMSNLIDSEVKQLITDALKEATKILNENIESLHRIAKALLEYETLTGQELSDLLEGKPFLKKTADDKKVVSKSSLDVEDDTVDKETLEKLESDLDTGDKE.

Residues 1 to 12 (MKKLLENLSLWM) are Cytoplasmic-facing. The helical transmembrane segment at 13–33 (GIIILVTLLFGQVALNFGFGI) threads the bilayer. At 34-104 (RNEKIQFSEF…VASGDSFLGL (71 aa)) the chain is on the periplasmic side. The chain crosses the membrane as a helical span at residues 105 to 125 (LFNILISWFPMLLLIGVWIFF). Over 126-636 (MKQMQAGGNK…ESDLDTGDKE (511 aa)) the chain is Cytoplasmic. 197 to 204 (GPPGTGKT) is an ATP binding site. Histidine 419 lines the Zn(2+) pocket. The active site involves glutamate 420. Zn(2+) contacts are provided by histidine 423 and aspartate 497.

In the central section; belongs to the AAA ATPase family. It in the C-terminal section; belongs to the peptidase M41 family. As to quaternary structure, homohexamer. Requires Zn(2+) as cofactor.

Its subcellular location is the cell inner membrane. Functionally, acts as a processive, ATP-dependent zinc metallopeptidase for both cytoplasmic and membrane proteins. Plays a role in the quality control of integral membrane proteins. This is ATP-dependent zinc metalloprotease FtsH from Neorickettsia risticii (strain Illinois).